The following is a 381-amino-acid chain: Dihydroorotate dehydrogenase (quinone) (381 aa).

FMN contacts are provided by residues 77 to 81 (AGCDK) and alanine 101. Lysine 81 lines the substrate pocket. Position 126-129 (126-129 (NRLG)) interacts with substrate. The FMN site is built by asparagine 158 and asparagine 191. Substrate is bound at residue asparagine 191. The active-site Nucleophile is the serine 194. Position 196 (asparagine 196) interacts with substrate. Residues lysine 229 and threonine 257 each contribute to the FMN site. 258–259 (NT) is a binding site for substrate. FMN-binding positions include glycine 287, glycine 316, and 337-338 (YT).

The protein belongs to the dihydroorotate dehydrogenase family. Type 2 subfamily. In terms of assembly, monomer. FMN is required as a cofactor.

It localises to the cell membrane. The catalysed reaction is (S)-dihydroorotate + a quinone = orotate + a quinol. Its pathway is pyrimidine metabolism; UMP biosynthesis via de novo pathway; orotate from (S)-dihydroorotate (quinone route): step 1/1. Its function is as follows. Catalyzes the conversion of dihydroorotate to orotate with quinone as electron acceptor. The protein is Dihydroorotate dehydrogenase (quinone) (pyrD) of Synechocystis sp. (strain ATCC 27184 / PCC 6803 / Kazusa).